Consider the following 551-residue polypeptide: Endolytic murein transglycosylase (551 aa).

The Cytoplasmic segment spans residues methionine 1 to lysine 187. Positions valine 38–lysine 180 are disordered. Low complexity-rich tracts occupy residues proline 100 to arginine 110 and glutamine 145 to threonine 157. Basic and acidic residues predominate over residues aspartate 159–lysine 174. The chain crosses the membrane as a helical span at residues alanine 188–tyrosine 208. Over glutamine 209 to asparagine 551 the chain is Extracellular.

It belongs to the transglycosylase MltG family. In terms of assembly, interacts with RodZ. Interacts with MreC in the elongasome; interaction is strongly reduced when the 90 C-terminal residues of MreC are missing. Interacts with KhpB (also called EloR/Jag) via MltG's N-terminus, suggesting the N-terminus of MltG is cytoplasmic.

It localises to the cell membrane. The catalysed reaction is a peptidoglycan chain = a peptidoglycan chain with N-acetyl-1,6-anhydromuramyl-[peptide] at the reducing end + a peptidoglycan chain with N-acetylglucosamine at the non-reducing end.. Functionally, functions as a peptidoglycan terminase that cleaves nascent peptidoglycan strands endolytically to terminate their elongation. Its function is as follows. Mutations in this gene suppress deletion of PBP2b (penA); truncation at residue 168, undefined changes between residue Ile-447 and Ala-505, and mutation of Ala-505 suppress the penA deletion. Probably part of the elongasome which synthesizes peripheral peptidoglycan. The protein is Endolytic murein transglycosylase of Streptococcus pneumoniae (strain ATCC BAA-255 / R6).